The sequence spans 270 residues: tRNA pseudouridine synthase A (270 aa).

Asp-60 acts as the Nucleophile in catalysis. Residues 107 to 111 (FHARF) are RNA binding. Substrate is bound at residue Tyr-118. An interaction with tRNA region spans residues 168–172 (QCQSR).

This sequence belongs to the tRNA pseudouridine synthase TruA family. In terms of assembly, homodimer.

It catalyses the reaction uridine(38/39/40) in tRNA = pseudouridine(38/39/40) in tRNA. Functionally, formation of pseudouridine at positions 38, 39 and 40 in the anticodon stem and loop of transfer RNAs. The polypeptide is tRNA pseudouridine synthase A (Klebsiella pneumoniae (strain 342)).